Consider the following 139-residue polypeptide: Large ribosomal subunit protein eL34 (139 aa).

The segment at 113–139 is disordered; the sequence is VSKPPKIAKAPAAAAAAKPAKTATKSK.

It belongs to the eukaryotic ribosomal protein eL34 family.

This Ochlerotatus triseriatus (Eastern treehole mosquito) protein is Large ribosomal subunit protein eL34 (RpL34).